We begin with the raw amino-acid sequence, 474 residues long: Synaptotagmin 1 (474 aa).

2 disordered regions span residues 1–49 and 63–84; these read MPPN…DRQE and QRIAQVESTTRSATTEAQESTT. Residues 1–107 are Vesicular-facing; that stretch reads MPPNAKSETD…EVVTEVIAER (107 aa). The segment covering 30–49 has biased composition (basic and acidic residues); that stretch reads VDQKLEETHHSKFREVDRQE. Residues 69–84 show a composition bias toward low complexity; the sequence is ESTTRSATTEAQESTT. A helical membrane pass occupies residues 108-134; sequence TGLPTWGVVAIIILVFLVVFGIIFFCV. Topologically, residues 135 to 474 are cytoplasmic; the sequence is RRFLKKRRTK…ETDEILKNMK (340 aa). The interval 170-189 is disordered; that stretch reads PDMEELTENAEEGDEEDKQS. Residues 171–187 show a composition bias toward acidic residues; it reads DMEELTENAEEGDEEDK. A phospholipid binding region spans residues 186 to 434; that stretch reads DKQSEQKLGR…PIGRCILGCM (249 aa). 2 consecutive C2 domains span residues 192–312 and 325–458; these read KLGR…EEWR and KLGD…AQWH. The Ca(2+) site is built by Leu-222, Asp-223, Asp-229, Asp-282, Phe-283, Asp-284, Ser-287, Lys-288, Asp-290, Asp-356, Asp-362, Asp-416, and Asp-418.

Belongs to the synaptotagmin family. As to quaternary structure, homodimer or homotrimer (Potential). Identified in a complex with Syn and nwk. Interacts with StnA and StnB via its second C2 domain. This interaction may mediate its retrieval from the plasma membrane, thereby facilitating the internalization of multiple synaptic vesicles from the plasma membrane. Ca(2+) serves as cofactor.

The protein resides in the cytoplasmic vesicle. It localises to the secretory vesicle. Its subcellular location is the synaptic vesicle membrane. It is found in the synapse. Functionally, may have a regulatory role in the membrane interactions during trafficking of synaptic vesicles at the active zone of the synapse. It binds acidic phospholipids with a specificity that requires the presence of both an acidic head group and a diacyl backbone. This chain is Synaptotagmin 1 (Syt1), found in Drosophila melanogaster (Fruit fly).